Here is a 527-residue protein sequence, read N- to C-terminus: EGF domain-specific O-linked N-acetylglucosamine transferase (527 aa).

The N-terminal stretch at 1–19 is a signal peptide; sequence MLMLLVFGVLLHEVPLSGQ. The Required for optimal activity signature appears at 295 to 297; that stretch reads DYD. N-linked (GlcNAc...) asparagine glycosylation occurs at asparagine 354. Residues 524–527 carry the Prevents secretion from ER motif; the sequence is HDEL.

The protein belongs to the glycosyltransferase 61 family.

It is found in the endoplasmic reticulum lumen. It catalyses the reaction L-seryl-[protein] + UDP-N-acetyl-alpha-D-glucosamine = 3-O-(N-acetyl-beta-D-glucosaminyl)-L-seryl-[protein] + UDP + H(+). It carries out the reaction L-threonyl-[protein] + UDP-N-acetyl-alpha-D-glucosamine = 3-O-(N-acetyl-beta-D-glucosaminyl)-L-threonyl-[protein] + UDP + H(+). Catalyzes the transfer of a single N-acetylglucosamine from UDP-GlcNAc to a serine or threonine residue in extracellular proteins resulting in their modification with a beta-linked N-acetylglucosamine (O-GlcNAc). Specifically glycosylates the Thr residue located between the fifth and sixth conserved cysteines of folded EGF-like domains. This chain is EGF domain-specific O-linked N-acetylglucosamine transferase (Eogt), found in Rattus norvegicus (Rat).